Here is a 303-residue protein sequence, read N- to C-terminus: uncharacterized protein (303 aa).

The protein localises to the cytoplasm. This is an uncharacterized protein from Saccharomyces cerevisiae (strain ATCC 204508 / S288c) (Baker's yeast).